Consider the following 286-residue polypeptide: Protein FAM87A (286 aa).

Transmembrane regions (helical) follow at residues 68–88 (YLHS…ETAL) and 161–181 (SFFV…GDML).

This sequence belongs to the FAM87 family.

Its subcellular location is the membrane. This chain is Protein FAM87A (FAM87A), found in Homo sapiens (Human).